Here is a 43-residue protein sequence, read N- to C-terminus: Protein PsbN (43 aa).

The chain crosses the membrane as a helical span at residues 5 to 27 (TLVAISISGSLVSFTGYALYTAF).

This sequence belongs to the PsbN family.

It localises to the plastid. The protein localises to the chloroplast thylakoid membrane. Its function is as follows. May play a role in photosystem I and II biogenesis. The sequence is that of Protein PsbN from Lactoris fernandeziana.